The chain runs to 37 residues: Large ribosomal subunit protein bL36 (37 aa).

The protein belongs to the bacterial ribosomal protein bL36 family.

The chain is Large ribosomal subunit protein bL36 from Thermomicrobium roseum (strain ATCC 27502 / DSM 5159 / P-2).